Reading from the N-terminus, the 196-residue chain is MAILPIRIVGDPVLHEPTETVSESPAELSELIADMYDTMDAANGVGLAANQVGIPLRLFVYDCPDVDETGKPFRRRGCVVNPVLETSERPETMPDPDDDVEGCLSVPGEQFPTGRAEWAKVTGTDADGNAVEIEGRDFFARMLQHEVGHLDGFLYVDMLVGRNARAAKKTIKRAGWGVPGLSWVPGTVEDPFGHDD.

Residues cysteine 103 and histidine 145 each coordinate Fe cation. The active site involves glutamate 146. Position 149 (histidine 149) interacts with Fe cation.

It belongs to the polypeptide deformylase family. The cofactor is Fe(2+).

It carries out the reaction N-terminal N-formyl-L-methionyl-[peptide] + H2O = N-terminal L-methionyl-[peptide] + formate. In terms of biological role, removes the formyl group from the N-terminal Met of newly synthesized proteins. Requires at least a dipeptide for an efficient rate of reaction. N-terminal L-methionine is a prerequisite for activity but the enzyme has broad specificity at other positions. The polypeptide is Peptide deformylase (Rhodococcus opacus (strain B4)).